The sequence spans 127 residues: Aspartate 1-decarboxylase (127 aa).

The active-site Schiff-base intermediate with substrate; via pyruvic acid is the S25. S25 carries the pyruvic acid (Ser) modification. Residue T57 participates in substrate binding. Residue Y58 is the Proton donor of the active site. 73–75 serves as a coordination point for substrate; sequence GAA.

It belongs to the PanD family. In terms of assembly, heterooctamer of four alpha and four beta subunits. It depends on pyruvate as a cofactor. Is synthesized initially as an inactive proenzyme, which is activated by self-cleavage at a specific serine bond to produce a beta-subunit with a hydroxyl group at its C-terminus and an alpha-subunit with a pyruvoyl group at its N-terminus.

The protein localises to the cytoplasm. The enzyme catalyses L-aspartate + H(+) = beta-alanine + CO2. The protein operates within cofactor biosynthesis; (R)-pantothenate biosynthesis; beta-alanine from L-aspartate: step 1/1. Catalyzes the pyruvoyl-dependent decarboxylation of aspartate to produce beta-alanine. The polypeptide is Aspartate 1-decarboxylase (Carboxydothermus hydrogenoformans (strain ATCC BAA-161 / DSM 6008 / Z-2901)).